A 270-amino-acid chain; its full sequence is Feruloyl esterase C (270 aa).

Residues 1-21 (MLRAVLLPTLLAFGAFTPVHG) form the signal peptide.

It belongs to the faeC family.

The protein localises to the secreted. It catalyses the reaction feruloyl-polysaccharide + H2O = ferulate + polysaccharide.. Its function is as follows. Involved in degradation of plant cell walls. Hydrolyzes the feruloyl-arabinose ester bond in arabinoxylans, and the feruloyl-galactose ester bond in pectin. Active against paranitrophenyl-acetate, methyl ferulate and wheat arabinoxylan. In Emericella nidulans (strain FGSC A4 / ATCC 38163 / CBS 112.46 / NRRL 194 / M139) (Aspergillus nidulans), this protein is Feruloyl esterase C (faeC).